We begin with the raw amino-acid sequence, 428 residues long: Serine--tRNA ligase (428 aa).

231-233 provides a ligand contact to L-serine; that stretch reads TAE. 262 to 264 provides a ligand contact to ATP; it reads RSE. Position 285 (E285) interacts with L-serine. Residue 349–352 participates in ATP binding; that stretch reads EISS. S385 lines the L-serine pocket.

This sequence belongs to the class-II aminoacyl-tRNA synthetase family. Type-1 seryl-tRNA synthetase subfamily. Homodimer. The tRNA molecule binds across the dimer.

The protein resides in the cytoplasm. The enzyme catalyses tRNA(Ser) + L-serine + ATP = L-seryl-tRNA(Ser) + AMP + diphosphate + H(+). It catalyses the reaction tRNA(Sec) + L-serine + ATP = L-seryl-tRNA(Sec) + AMP + diphosphate + H(+). It functions in the pathway aminoacyl-tRNA biosynthesis; selenocysteinyl-tRNA(Sec) biosynthesis; L-seryl-tRNA(Sec) from L-serine and tRNA(Sec): step 1/1. Functionally, catalyzes the attachment of serine to tRNA(Ser). Is also able to aminoacylate tRNA(Sec) with serine, to form the misacylated tRNA L-seryl-tRNA(Sec), which will be further converted into selenocysteinyl-tRNA(Sec). The chain is Serine--tRNA ligase from Staphylococcus carnosus (strain TM300).